The primary structure comprises 425 residues: Ribulose bisphosphate carboxylase/oxygenase activase B, chloroplastic (425 aa).

The transit peptide at 1 to 43 (MASAFSSTVGAPASTPTIFLGKKVKNYYHGGNKMKSRVVRVMA) directs the protein to the chloroplast. 153–160 (GGKGQGKS) contributes to the ATP binding site.

This sequence belongs to the RuBisCO activase family.

Its subcellular location is the plastid. The protein localises to the chloroplast stroma. Activation of RuBisCO (ribulose-1,5-bisphosphate carboxylase/oxygenase; EC 4.1.1.39) involves the ATP-dependent carboxylation of the epsilon-amino group of lysine leading to a carbamate structure. The polypeptide is Ribulose bisphosphate carboxylase/oxygenase activase B, chloroplastic (RCAB) (Hordeum vulgare (Barley)).